A 151-amino-acid chain; its full sequence is Probable transcriptional regulator syrB2 (151 aa).

The segment at 1 to 61 (MADESNTGSI…PRRYSEQQRK (61 aa)) is disordered. A compositionally biased stretch (low complexity) spans 11–23 (AAAVAPNADVKAP). Over residues 24–35 (AAKKKRSPRRQK) the composition is skewed to basic residues.

Belongs to the SyrB family.

Its function is as follows. Seems to affect the transcription of cya3. May be negatively autoregulated. This is Probable transcriptional regulator syrB2 (syrB2) from Rhizobium meliloti (strain 1021) (Ensifer meliloti).